Here is a 220-residue protein sequence, read N- to C-terminus: Thiamine-phosphate synthase (220 aa).

Residues 39–43 (QLRDK) and N80 contribute to the 4-amino-2-methyl-5-(diphosphooxymethyl)pyrimidine site. Positions 81 and 100 each coordinate Mg(2+). Residue S119 participates in 4-amino-2-methyl-5-(diphosphooxymethyl)pyrimidine binding. 145-147 (TPT) provides a ligand contact to 2-[(2R,5Z)-2-carboxy-4-methylthiazol-5(2H)-ylidene]ethyl phosphate. Position 148 (K148) interacts with 4-amino-2-methyl-5-(diphosphooxymethyl)pyrimidine. G176 serves as a coordination point for 2-[(2R,5Z)-2-carboxy-4-methylthiazol-5(2H)-ylidene]ethyl phosphate.

This sequence belongs to the thiamine-phosphate synthase family. It depends on Mg(2+) as a cofactor.

It catalyses the reaction 2-[(2R,5Z)-2-carboxy-4-methylthiazol-5(2H)-ylidene]ethyl phosphate + 4-amino-2-methyl-5-(diphosphooxymethyl)pyrimidine + 2 H(+) = thiamine phosphate + CO2 + diphosphate. The enzyme catalyses 2-(2-carboxy-4-methylthiazol-5-yl)ethyl phosphate + 4-amino-2-methyl-5-(diphosphooxymethyl)pyrimidine + 2 H(+) = thiamine phosphate + CO2 + diphosphate. The catalysed reaction is 4-methyl-5-(2-phosphooxyethyl)-thiazole + 4-amino-2-methyl-5-(diphosphooxymethyl)pyrimidine + H(+) = thiamine phosphate + diphosphate. The protein operates within cofactor biosynthesis; thiamine diphosphate biosynthesis; thiamine phosphate from 4-amino-2-methyl-5-diphosphomethylpyrimidine and 4-methyl-5-(2-phosphoethyl)-thiazole: step 1/1. Condenses 4-methyl-5-(beta-hydroxyethyl)thiazole monophosphate (THZ-P) and 2-methyl-4-amino-5-hydroxymethyl pyrimidine pyrophosphate (HMP-PP) to form thiamine monophosphate (TMP). This is Thiamine-phosphate synthase from Mycobacterium marinum (strain ATCC BAA-535 / M).